The primary structure comprises 154 residues: MAARLCCQLDTARDVLCLRPVGAESRGRPFSGSVGALPPSSPPAVPADHGAHLSLRGLPVCAFSSAGPCALRFTSARCMETTVNAPRNLPKVLHKRTLGLSTMSTTGIETYFKDCVFKDWEELGEEIRLKVFVLGGCRHKLVCSPAPCNFFTSA.

The interval 68 to 117 (PCALRFTSARCMETTVNAPRNLPKVLHKRTLGLSTMSTTGIETYFKDCVF) is mitochondrial targeting sequence.

This sequence belongs to the orthohepadnavirus protein X family. May form homodimer. May interact with host CEBPA, CFLAR, CREB1, DDB1, E4F1, HBXIP, HSPD1/HSP60, NFKBIA, POLR2E and SMAD4. Interacts with host SMC5-SMC6 complex and induces its degradation. Interacts with host TRPC4AP; leading to prevent ubiquitination of TRPC4AP. Interacts with host PLSCR1; this interaction promotes ubiquitination and degradation of HBx and impairs HBx-mediated cell proliferation. In terms of processing, a fraction may be phosphorylated in insect cells and HepG2 cells, a human hepatoblastoma cell line. Phosphorylated in vitro by host protein kinase C or mitogen-activated protein kinase. N-acetylated in insect cells.

It is found in the host cytoplasm. The protein resides in the host nucleus. The protein localises to the host mitochondrion. In terms of biological role, multifunctional protein that plays a role in silencing host antiviral defenses and promoting viral transcription. Does not seem to be essential for HBV infection. May be directly involved in development of cirrhosis and liver cancer (hepatocellular carcinoma). Most of cytosolic activities involve modulation of cytosolic calcium. The effect on apoptosis is controversial depending on the cell types in which the studies have been conducted. May induce apoptosis by localizing in mitochondria and causing loss of mitochondrial membrane potential. May also modulate apoptosis by binding host CFLAR, a key regulator of the death-inducing signaling complex (DISC). Promotes viral transcription by using the host E3 ubiquitin ligase DDB1 to target the SMC5-SMC6 complex to proteasomal degradation. This host complex would otherwise bind to viral episomal DNA, and prevents its transcription. Moderately stimulates transcription of many different viral and cellular transcription elements. Promoters and enhancers stimulated by HBx contain DNA binding sites for NF-kappa-B, AP-1, AP-2, c-EBP, ATF/CREB, or the calcium-activated factor NF-AT. The protein is Protein X of Orangutan hepatitis B virus (isolate Somad) (HBVoru).